The following is a 199-amino-acid chain: N-(5'-phosphoribosyl)anthranilate isomerase (199 aa).

Belongs to the TrpF family.

It catalyses the reaction N-(5-phospho-beta-D-ribosyl)anthranilate = 1-(2-carboxyphenylamino)-1-deoxy-D-ribulose 5-phosphate. It functions in the pathway amino-acid biosynthesis; L-tryptophan biosynthesis; L-tryptophan from chorismate: step 3/5. This chain is N-(5'-phosphoribosyl)anthranilate isomerase, found in Campylobacter jejuni subsp. jejuni serotype O:2 (strain ATCC 700819 / NCTC 11168).